A 246-amino-acid polypeptide reads, in one-letter code: Exosome complex component Rrp41 (246 aa).

It belongs to the RNase PH family. Rrp41 subfamily. As to quaternary structure, component of the archaeal exosome complex. Forms a hexameric ring-like arrangement composed of 3 Rrp41-Rrp42 heterodimers. The hexameric ring associates with a trimer of Rrp4 and/or Csl4 subunits.

Its subcellular location is the cytoplasm. Functionally, catalytic component of the exosome, which is a complex involved in RNA degradation. Has 3'-&gt;5' exoribonuclease activity. Can also synthesize heteromeric RNA-tails. In Pyrobaculum calidifontis (strain DSM 21063 / JCM 11548 / VA1), this protein is Exosome complex component Rrp41.